We begin with the raw amino-acid sequence, 351 residues long: Histidinol-phosphate aminotransferase (351 aa).

Position 221 is an N6-(pyridoxal phosphate)lysine (K221).

It belongs to the class-II pyridoxal-phosphate-dependent aminotransferase family. Histidinol-phosphate aminotransferase subfamily. Homodimer. It depends on pyridoxal 5'-phosphate as a cofactor.

The catalysed reaction is L-histidinol phosphate + 2-oxoglutarate = 3-(imidazol-4-yl)-2-oxopropyl phosphate + L-glutamate. Its pathway is amino-acid biosynthesis; L-histidine biosynthesis; L-histidine from 5-phospho-alpha-D-ribose 1-diphosphate: step 7/9. The chain is Histidinol-phosphate aminotransferase from Staphylococcus epidermidis (strain ATCC 12228 / FDA PCI 1200).